We begin with the raw amino-acid sequence, 802 residues long: Leucine--tRNA ligase (802 aa).

A 'HIGH' region motif is present at residues 40–51 (PYPSGAGLHVGH). A 'KMSKS' region motif is present at residues 576–580 (KMSKS). An ATP-binding site is contributed by Lys-579.

It belongs to the class-I aminoacyl-tRNA synthetase family.

It localises to the cytoplasm. It catalyses the reaction tRNA(Leu) + L-leucine + ATP = L-leucyl-tRNA(Leu) + AMP + diphosphate. This chain is Leucine--tRNA ligase, found in Bacillus cytotoxicus (strain DSM 22905 / CIP 110041 / 391-98 / NVH 391-98).